A 333-amino-acid polypeptide reads, in one-letter code: Taste receptor type 2 member 38 (333 aa).

Residues 1 to 17 lie on the Extracellular side of the membrane; it reads MLTLTRIRTVSYEVRST. The helical transmembrane segment at 18–38 threads the bilayer; that stretch reads FLFISVLEFAVGFLTNAFVFL. The Cytoplasmic segment spans residues 39 to 55; the sequence is VNFWDVVKRQPLSNSDC. Residues 56–76 form a helical membrane-spanning segment; sequence VLLCLSISRLFLHGLLFLSAI. The Extracellular segment spans residues 77-94; that stretch reads QLTHFQKLSEPLNHSYQA. The helical transmembrane segment at 95 to 115 threads the bilayer; it reads IIMLWMIANQANLWLAACLSL. The Cytoplasmic segment spans residues 116–142; the sequence is LYCSKLIRFSHTFLICLASWVSRKISQ. A helical membrane pass occupies residues 143 to 163; it reads MLLGIILCSCICTVLCVWCFF. Residues 164–190 lie on the Extracellular side of the membrane; sequence SRPHFTVTTVLFMNNNTRLNWQIKDLN. An N-linked (GlcNAc...) asparagine glycan is attached at N178. Residues 191–211 form a helical membrane-spanning segment; sequence LFYSFLFCYLWSVPPFLLFLV. The Cytoplasmic portion of the chain corresponds to 212 to 251; sequence SSGMLTVSLGRHMRTMKVYIRDSRDPSLEAHIKALKSLVS. Residues 252 to 272 traverse the membrane as a helical segment; the sequence is FFCFFVISSCAAFISVPLLIL. Topologically, residues 273 to 276 are extracellular; the sequence is WRDK. The helical transmembrane segment at 277–297 threads the bilayer; the sequence is IGVMVCVGIMAACPSGHAAVL. Residues 298–333 are Cytoplasmic-facing; the sequence is ISGNAKLRRAVTTILLWAQSSLKVRADHKADSRTPC.

This sequence belongs to the G-protein coupled receptor T2R family.

Its subcellular location is the membrane. In terms of biological role, receptor that may play a role in the perception of bitterness and is gustducin-linked. May play a role in sensing the chemical composition of the gastrointestinal content. The activity of this receptor may stimulate alpha gustducin, mediate PLC-beta-2 activation and lead to the gating of TRPM5. The sequence is that of Taste receptor type 2 member 38 (TAS2R38) from Gorilla gorilla gorilla (Western lowland gorilla).